The primary structure comprises 80 residues: RNA-binding protein Hfq (80 aa).

The Sm domain occupies 10 to 69 (DPFLNVLRKEHIPVSIYLVNGIKLQGHIDSFDQYVVLLRNSVTQMVYKHAISTIVPGKAV).

It belongs to the Hfq family. Homohexamer.

In terms of biological role, RNA chaperone that binds small regulatory RNA (sRNAs) and mRNAs to facilitate mRNA translational regulation in response to envelope stress, environmental stress and changes in metabolite concentrations. Also binds with high specificity to tRNAs. In Nitrosomonas eutropha (strain DSM 101675 / C91 / Nm57), this protein is RNA-binding protein Hfq.